The chain runs to 695 residues: MNVSQQIEPRAAASERNMADAIRFLSMDAVEKANSGHPGMPMGMADAVTVLFNRFIRIDPSLPDWPDRDRFVLSAGHGSMLLYSLHHLIGFADMPMAELSSFRQLGSKTAGHPEYGHALGIETTTGPLGQGISTAVGMAMAEQMMASRFGSALCNHFTYVVAGDGCLQEGISHEAIDLAGHLKLRKLVVLWDDNRISIDGSTDLSTSMNQLARFRAASWDAQAVDGHDPEAVAKALERARRTRKPSLIACRTRIGKGAASMEGSHKTHGAALGDKEIAATREKLGWPHPPFFVPPEIRAAWAKVAARGRTAREAWDIRLDASRSKKRYEQTIRRQFDGELGDLLAKFRSAHRTRATKVATRQASQMALEVINGATALTIGGSADLTGSNLTMTSQTQPISPGNFKGRYLHYGIREHGMAAAMNGIALHGGFIPYGGTFLVFSDYARGAMRLSALMGLPVIYVLTHDSIGLGEDGPTHQPVEHLAMLRATPNLNVFRPADIIETAECWEIALGEKNTPSVLALSRQALPMLRRTEGNENQSALGAYVLREARGNRDITILATGSEVEIAVAAAERLQAEEGIAAAVVSMPCWEKFEVQDLAYRRKVLGDAPRIAIEAAGRLGWDRWMGPDGAFVGMTGFGASAPAGDLYRHFGITADHVVAEALELLRRAYSETLPIGARIGPHPSAHTVRSSQEA.

Residue histidine 37 coordinates substrate. Thiamine diphosphate contacts are provided by residues histidine 77 and 126 to 128 (GPL). Residue aspartate 164 participates in Mg(2+) binding. Thiamine diphosphate is bound by residues glycine 165 and asparagine 194. Residues asparagine 194 and isoleucine 196 each contribute to the Mg(2+) site. Positions 268, 361, and 388 each coordinate substrate. Position 268 (histidine 268) interacts with thiamine diphosphate. Glutamate 415 functions as the Proton donor in the catalytic mechanism. Phenylalanine 441 provides a ligand contact to thiamine diphosphate. Substrate is bound by residues histidine 465, aspartate 473, and arginine 524.

It belongs to the transketolase family. In terms of assembly, homodimer. Requires Mg(2+) as cofactor. The cofactor is Ca(2+). Mn(2+) serves as cofactor. Co(2+) is required as a cofactor. It depends on thiamine diphosphate as a cofactor.

The catalysed reaction is D-sedoheptulose 7-phosphate + D-glyceraldehyde 3-phosphate = aldehydo-D-ribose 5-phosphate + D-xylulose 5-phosphate. It participates in carbohydrate biosynthesis; Calvin cycle. Functionally, catalyzes the transfer of a two-carbon ketol group from a ketose donor to an aldose acceptor, via a covalent intermediate with the cofactor thiamine pyrophosphate. In Sinorhizobium medicae (strain WSM419) (Ensifer medicae), this protein is Transketolase (cbbT).